The chain runs to 180 residues: Fucolectin-3 (180 aa).

A signal peptide spans 1–22 (MEVKMIILLFQILAISTLKSDS). The F5/8 type C-like stretch occupies residues 31–179 (QENVALRGRA…VEVNVLFPAP (149 aa)). Asn58, Asp61, Asn63, and Ser72 together coordinate Ca(2+). 3 cysteine pairs are disulfide-bonded: Cys73-Cys168, Cys104-Cys105, and Cys130-Cys146. Residues His75 and Arg101 each coordinate alpha-L-fucose. The short motif at 101–103 (RGD) is the Cell attachment site element. Arg108 lines the alpha-L-fucose pocket. Residues Cys168 and Glu169 each contribute to the Ca(2+) site.

The protein belongs to the fucolectin family. As to quaternary structure, homotrimer. Parenchymal hepatocytes.

The protein localises to the secreted. It localises to the extracellular space. Its function is as follows. Acts as a defensive agent. Recognizes blood group fucosylated oligosaccharides including A, B, H and Lewis B-type antigens. Does not recognize Lewis A antigen and has low affinity for monovalent haptens. This is Fucolectin-3 from Anguilla japonica (Japanese eel).